The chain runs to 436 residues: 3-ketoacyl-CoA thiolase (436 aa).

Residue Cys99 is the Acyl-thioester intermediate of the active site. Active-site proton acceptor residues include His392 and Cys422.

This sequence belongs to the thiolase-like superfamily. Thiolase family. As to quaternary structure, heterotetramer of two alpha chains (FadJ) and two beta chains (FadI).

The protein resides in the cytoplasm. It carries out the reaction an acyl-CoA + acetyl-CoA = a 3-oxoacyl-CoA + CoA. Its pathway is lipid metabolism; fatty acid beta-oxidation. Its function is as follows. Catalyzes the final step of fatty acid oxidation in which acetyl-CoA is released and the CoA ester of a fatty acid two carbons shorter is formed. This Shewanella halifaxensis (strain HAW-EB4) protein is 3-ketoacyl-CoA thiolase.